Here is a 63-residue protein sequence, read N- to C-terminus: Disintegrin schistatin-like subunit B (63 aa).

In terms of domain architecture, Disintegrin spans 1-63; sequence NSVNPCCDPQ…TPDCPRNRYN (63 aa). Disulfide bonds link C6/C29, C20/C26, C25/C50, and C38/C57. Residues 42–44 carry the Cell attachment site motif; it reads RGD.

It belongs to the disintegrin family. Dimeric disintegrin subfamily. Heterodimer with subunit A; disulfide-linked. As to expression, expressed by the venom gland.

It is found in the secreted. In terms of biological role, may bind to both alpha-IIb/beta-3 (ITGA2B/ITGB3) and alpha-V/beta-3 (ITGAV/ITGB3) integrins, and may inhibit platelet aggregation. This Echis carinatus (Saw-scaled viper) protein is Disintegrin schistatin-like subunit B.